Consider the following 164-residue polypeptide: Transcription elongation factor GreA (164 aa).

A coiled-coil region spans residues 15–76 (DRLKNELDQL…LQELLNSAKV (62 aa)).

The protein belongs to the GreA/GreB family.

Necessary for efficient RNA polymerase transcription elongation past template-encoded arresting sites. The arresting sites in DNA have the property of trapping a certain fraction of elongating RNA polymerases that pass through, resulting in locked ternary complexes. Cleavage of the nascent transcript by cleavage factors such as GreA or GreB allows the resumption of elongation from the new 3'terminus. GreA releases sequences of 2 to 3 nucleotides. The protein is Transcription elongation factor GreA of Rhodococcus erythropolis (strain PR4 / NBRC 100887).